Consider the following 389-residue polypeptide: uncharacterized protein (389 aa).

3 WD repeats span residues 11–53 (SFGS…QKIK), 146–186 (SHHD…EEDA), and 289–330 (AHGD…LDIP). Position 351 is a phosphoserine (S351). Positions 361–389 (QKESVSTRPRKEKHKKAKKHSMKSRFKPY) are disordered. Residues 368–389 (RPRKEKHKKAKKHSMKSRFKPY) are compositionally biased toward basic residues.

This is an uncharacterized protein from Saccharomyces cerevisiae (strain ATCC 204508 / S288c) (Baker's yeast).